Here is a 251-residue protein sequence, read N- to C-terminus: L-xylulose reductase (251 aa).

Position 13 to 42 (13 to 42 (LVTGASQGIGKEICLSLAKAGAQVIAFARN)) interacts with NADP(+). Ser-143 serves as a coordination point for substrate. Tyr-156 (proton acceptor) is an active-site residue. NADP(+) is bound at residue Lys-160.

Belongs to the short-chain dehydrogenases/reductases (SDR) family. In terms of assembly, homotetramer. In terms of tissue distribution, expressed in intestine, gonad and spermatids (at protein level). Expressed in intestine, uterine seam, gonadal sheath cells, spermathecal-uterus valve and spermatids.

The protein localises to the cell membrane. The catalysed reaction is xylitol + NADP(+) = L-xylulose + NADPH + H(+). With respect to regulation, strongly inhibited by 10% dimethyl sulfoxide. Its function is as follows. Catalyzes the NADPH-dependent reduction of L-xylulose, D-xylulose, L-(+) erythrulose, D-erythrose, D-threose, L-ribulose, 1,4-dibromo-2,3-butanedione and 2,3-heptanedione. Also active against isatin, 9,10-phenanthrenequinone, menadione, 2,3-hexaenadione and 3,4-hexahenadione. No activity observed when tested using NADH rather than NADPH. This chain is L-xylulose reductase, found in Caenorhabditis elegans.